The chain runs to 41 residues: Alpha-1B-glycoprotein (41 aa).

Asparagine 23 carries an N-linked (GlcNAc...) asparagine glycan.

Interacts with CRISP3. Glycosylated. In terms of tissue distribution, plasma.

Its subcellular location is the secreted. This Equus caballus (Horse) protein is Alpha-1B-glycoprotein (A1BG).